We begin with the raw amino-acid sequence, 116 residues long: UPF0102 protein Sala_0262 (116 aa).

This sequence belongs to the UPF0102 family.

The protein is UPF0102 protein Sala_0262 of Sphingopyxis alaskensis (strain DSM 13593 / LMG 18877 / RB2256) (Sphingomonas alaskensis).